A 707-amino-acid chain; its full sequence is Tryptophan synthase (707 aa).

The tract at residues 1–297 (MSEQLRQTFA…VKKEILDEFD (297 aa)) is tryptophan synthase alpha chain. Residues glutamate 50 and aspartate 61 each act as proton acceptor in the active site. The interval 298–707 (ENHKHPIRFG…DLRFEEDPSA (410 aa)) is tryptophan synthase beta chain. An N6-(pyridoxal phosphate)lysine modification is found at lysine 384. Phosphoserine is present on residues serine 540 and serine 683.

The protein in the N-terminal section; belongs to the TrpA family. This sequence in the C-terminal section; belongs to the TrpB family. Pyridoxal 5'-phosphate serves as cofactor.

It carries out the reaction (1S,2R)-1-C-(indol-3-yl)glycerol 3-phosphate + L-serine = D-glyceraldehyde 3-phosphate + L-tryptophan + H2O. Its pathway is amino-acid biosynthesis; L-tryptophan biosynthesis; L-tryptophan from chorismate: step 5/5. This chain is Tryptophan synthase (TRP5), found in Saccharomyces cerevisiae (strain ATCC 204508 / S288c) (Baker's yeast).